The following is an 83-amino-acid chain: Exodeoxyribonuclease 7 small subunit (83 aa).

This sequence belongs to the XseB family. As to quaternary structure, heterooligomer composed of large and small subunits.

Its subcellular location is the cytoplasm. It carries out the reaction Exonucleolytic cleavage in either 5'- to 3'- or 3'- to 5'-direction to yield nucleoside 5'-phosphates.. Functionally, bidirectionally degrades single-stranded DNA into large acid-insoluble oligonucleotides, which are then degraded further into small acid-soluble oligonucleotides. The polypeptide is Exodeoxyribonuclease 7 small subunit (Rhizobium leguminosarum bv. trifolii (strain WSM2304)).